The sequence spans 149 residues: Deoxyuridine 5'-triphosphate nucleotidohydrolase (149 aa).

Substrate contacts are provided by residues 68–70 (RSG), Asn81, 85–87 (LID), and Met95.

The protein belongs to the dUTPase family. Mg(2+) serves as cofactor.

The catalysed reaction is dUTP + H2O = dUMP + diphosphate + H(+). The protein operates within pyrimidine metabolism; dUMP biosynthesis; dUMP from dCTP (dUTP route): step 2/2. Its function is as follows. This enzyme is involved in nucleotide metabolism: it produces dUMP, the immediate precursor of thymidine nucleotides and it decreases the intracellular concentration of dUTP so that uracil cannot be incorporated into DNA. This is Deoxyuridine 5'-triphosphate nucleotidohydrolase from Herminiimonas arsenicoxydans.